Consider the following 239-residue polypeptide: MARGCLCCVKYMMFLFNLLFWLSGCGLLGVGIWLSVSQGSFATFSPSFPSLSAANLVITLGSVVMVTGFLGCLGAIKENKCLLLSFFIVLLIILLAELILLILFFVYTEKVSENAKQDLKDGLRLYNTDNNVGLRNAWNIIQAEWQCCGVTGLSDWHEALQEKSVPDRCCQEHYTECGRNTTNVFWSQGCYEKVEEWLNDNKHLLGTIAMCVLVLQLLGMAFSMTLYQQIHRAGKKYDA.

The Cytoplasmic portion of the chain corresponds to 1–13; the sequence is MARGCLCCVKYMM. The chain crosses the membrane as a helical span at residues 14–34; sequence FLFNLLFWLSGCGLLGVGIWL. Topologically, residues 35–55 are extracellular; sequence SVSQGSFATFSPSFPSLSAAN. Residues 56-76 traverse the membrane as a helical segment; it reads LVITLGSVVMVTGFLGCLGAI. Topologically, residues 77-85 are cytoplasmic; the sequence is KENKCLLLS. The helical transmembrane segment at 86–106 threads the bilayer; it reads FFIVLLIILLAELILLILFFV. The Extracellular portion of the chain corresponds to 107–203; the sequence is YTEKVSENAK…VEEWLNDNKH (97 aa). N180 carries an N-linked (GlcNAc...) asparagine glycan. A helical transmembrane segment spans residues 204–224; that stretch reads LLGTIAMCVLVLQLLGMAFSM. The Cytoplasmic portion of the chain corresponds to 225–239; sequence TLYQQIHRAGKKYDA.

It belongs to the tetraspanin (TM4SF) family.

It localises to the membrane. This is Tetraspanin-9 (tspan9) from Danio rerio (Zebrafish).